We begin with the raw amino-acid sequence, 248 residues long: DNA polymerase sliding clamp 2 (248 aa).

The protein belongs to the PCNA family. As to quaternary structure, the subunits circularize to form a toroid; DNA passes through its center. Replication factor C (RFC) is required to load the toroid on the DNA. Forms a dimeric complex with PCNA3 and trimeric complexes PCNA123 and PCNA323; does not form homotrimers. Crystal structures show a heterotetramer of 2 PCNA2 and 2 PCNA3, which would be large enough to clamp a Holliday junction.

Sliding clamp subunit that acts as a moving platform for DNA processing. Responsible for tethering the catalytic subunit of DNA polymerase and other proteins to DNA during high-speed replication. Both trimeric complexes inhibit DNA ligase and both 3'-5' and 5'-3' activity of Hel308 (Hjm) helicase, but stimulate Hjc, the Holliday junction cleavage enzyme. This chain is DNA polymerase sliding clamp 2, found in Sulfurisphaera tokodaii (strain DSM 16993 / JCM 10545 / NBRC 100140 / 7) (Sulfolobus tokodaii).